A 129-amino-acid polypeptide reads, in one-letter code: Small ribosomal subunit protein uS11 (129 aa).

Belongs to the universal ribosomal protein uS11 family. Part of the 30S ribosomal subunit. Interacts with proteins S7 and S18. Binds to IF-3.

Its function is as follows. Located on the platform of the 30S subunit, it bridges several disparate RNA helices of the 16S rRNA. Forms part of the Shine-Dalgarno cleft in the 70S ribosome. In Chelativorans sp. (strain BNC1), this protein is Small ribosomal subunit protein uS11.